An 874-amino-acid chain; its full sequence is Speckle targeted PIP5K1A-regulated poly(A) polymerase (874 aa).

Residues 16-46 (FRCCLCHVTTANRPSLDAHLGGRKHRHLVEL) form a Matrin-type zinc finger. The RRM domain occupies 56–128 (RSVFVSGFPR…HRLRVRPREQ (73 aa)). The interval 113–146 (QHSLGGHRLRVRPREQKEFQSPASKSPKGAAPDS) is disordered. ATP is bound at residue Ser205. Residues Asp216 and Asp218 each contribute to the Mg(2+) site. The UTP site is built by Asp216 and Asp218. The interval 252–334 (QALACTPASP…ELAETPKEEK (83 aa)) is disordered. The span at 259-269 (ASPPDSQPPAS) shows a compositional bias: pro residues. A compositionally biased stretch (polar residues) spans 280–291 (TPSSSLAPQTPD). Asn392 lines the ATP pocket. Asn392, Arg414, Tyr432, and His549 together coordinate UTP. The PAP-associated domain maps to 491-549 (LSSLLAQFFSCVSCWDLRGSLLSLREGQALPVAGGLPSNLWEGLRLGPLNLQDPFDLSH). The interval 598 to 874 (SSPSSLLSAT…FLPQAIRHLK (277 aa)) is KA1; binds the bulging loops of U6 snRNA but is dispensable for terminal uridylyltransferase activity. Disordered regions lie at residues 638-662 (ATKR…KRLK) and 705-761 (MQSP…ASLP). Position 750 is a phosphoserine (Ser750).

It belongs to the DNA polymerase type-B-like family. In terms of assembly, associates with the cleavage and polyadenylation specificity factor (CPSF) complex. Interacts with CPSF1 and CPSF3; the interaction is direct. Interacts with PIP5K1A. Mg(2+) is required as a cofactor. Requires Mn(2+) as cofactor. Phosphorylated by CK1 in the proline-rich (Pro-rich) region. As to expression, widely expressed.

It localises to the nucleus. It is found in the nucleolus. The protein localises to the nucleus speckle. It carries out the reaction RNA(n) + UTP = RNA(n)-3'-uridine ribonucleotide + diphosphate. It catalyses the reaction RNA(n) + ATP = RNA(n)-3'-adenine ribonucleotide + diphosphate. Adenylyltransferase activity is specifically phosphatidylinositol 4,5-bisphosphate (PtdIns(4,5)P2). In terms of biological role, poly(A) polymerase that creates the 3'-poly(A) tail of specific pre-mRNAs. Localizes to nuclear speckles together with PIP5K1A and mediates polyadenylation of a select set of mRNAs, such as HMOX1. In addition to polyadenylation, it is also required for the 3'-end cleavage of pre-mRNAs: binds to the 3'UTR of targeted pre-mRNAs and promotes the recruitment and assembly of the CPSF complex on the 3'UTR of pre-mRNAs. In addition to adenylyltransferase activity, also has uridylyltransferase activity. However, the ATP ratio is higher than UTP in cells, suggesting that it functions primarily as a poly(A) polymerase. Acts as a specific terminal uridylyltransferase for U6 snRNA in vitro: responsible for a controlled elongation reaction that results in the restoration of the four 3'-terminal UMP-residues found in newly transcribed U6 snRNA. Not involved in replication-dependent histone mRNA degradation. The protein is Speckle targeted PIP5K1A-regulated poly(A) polymerase (TUT1) of Homo sapiens (Human).